The sequence spans 205 residues: Anaerobic dimethyl sulfoxide reductase chain B (205 aa).

4Fe-4S ferredoxin-type domains are found at residues 5–33 (YGFF…LTPE), 59–89 (FAYY…KRED), and 90–119 (GFVV…YNET). 16 residues coordinate [4Fe-4S] cluster: Cys-14, Cys-17, Cys-20, Cys-24, Cys-67, Cys-70, Cys-75, Cys-79, Cys-99, Cys-102, Cys-105, Cys-109, Cys-126, Cys-129, Cys-141, and Cys-145. Residues 184–205 (KPNANSRPTGDTTGYLANPKEV) form a disordered region. The span at 186–195 (NANSRPTGDT) shows a compositional bias: polar residues.

In terms of assembly, heterotrimeric enzyme composed of a catalytic heterodimer (DmsAB) and a membrane anchor protein (DmsC). Requires [4Fe-4S] cluster as cofactor.

Functionally, electron transfer subunit of the terminal reductase during anaerobic growth on various sulfoxide and N-oxide compounds. This is Anaerobic dimethyl sulfoxide reductase chain B (dmsB) from Escherichia coli (strain K12).